A 250-amino-acid chain; its full sequence is Ubiquinone/menaquinone biosynthesis C-methyltransferase UbiE (250 aa).

Residues T73, D94, and 122–123 each bind S-adenosyl-L-methionine; that span reads DA.

The protein belongs to the class I-like SAM-binding methyltransferase superfamily. MenG/UbiE family.

It catalyses the reaction a 2-demethylmenaquinol + S-adenosyl-L-methionine = a menaquinol + S-adenosyl-L-homocysteine + H(+). The catalysed reaction is a 2-methoxy-6-(all-trans-polyprenyl)benzene-1,4-diol + S-adenosyl-L-methionine = a 5-methoxy-2-methyl-3-(all-trans-polyprenyl)benzene-1,4-diol + S-adenosyl-L-homocysteine + H(+). The protein operates within quinol/quinone metabolism; menaquinone biosynthesis; menaquinol from 1,4-dihydroxy-2-naphthoate: step 2/2. It functions in the pathway cofactor biosynthesis; ubiquinone biosynthesis. In terms of biological role, methyltransferase required for the conversion of demethylmenaquinol (DMKH2) to menaquinol (MKH2) and the conversion of 2-polyprenyl-6-methoxy-1,4-benzoquinol (DDMQH2) to 2-polyprenyl-3-methyl-6-methoxy-1,4-benzoquinol (DMQH2). The chain is Ubiquinone/menaquinone biosynthesis C-methyltransferase UbiE from Coxiella burnetii (strain CbuK_Q154) (Coxiella burnetii (strain Q154)).